The following is a 199-amino-acid chain: Thymidylate kinase (199 aa).

7–14 provides a ligand contact to ATP; the sequence is GTEGVGKT.

It belongs to the thymidylate kinase family.

The catalysed reaction is dTMP + ATP = dTDP + ADP. Its function is as follows. Phosphorylation of dTMP to form dTDP in both de novo and salvage pathways of dTTP synthesis. The sequence is that of Thymidylate kinase from Acinetobacter baumannii (strain ACICU).